Reading from the N-terminus, the 122-residue chain is Large ribosomal subunit protein uL14 (122 aa).

The protein belongs to the universal ribosomal protein uL14 family. In terms of assembly, part of the 50S ribosomal subunit. Forms a cluster with proteins L3 and L19. In the 70S ribosome, L14 and L19 interact and together make contacts with the 16S rRNA in bridges B5 and B8.

In terms of biological role, binds to 23S rRNA. Forms part of two intersubunit bridges in the 70S ribosome. The sequence is that of Large ribosomal subunit protein uL14 from Clostridium perfringens (strain ATCC 13124 / DSM 756 / JCM 1290 / NCIMB 6125 / NCTC 8237 / Type A).